Consider the following 289-residue polypeptide: Sphingomyelinase D (289 aa).

The first 22 residues, 1–22 (MQSISVLICVLLALSILNFTVA), serve as a signal peptide directing secretion. Histidine 34 is a catalytic residue. The Mg(2+) site is built by glutamate 54, aspartate 56, and aspartate 103. An SMD-tail motif is present at residues 282 to 289 (ATEDDAPW).

It belongs to the sphingomyelinase D/phospholipase D family. Requires Mg(2+) as cofactor.

The protein resides in the secreted. It catalyses the reaction a sphingomyelin + H2O = an N-acylsphing-4-enine 1-phosphate + choline + H(+). Sphingomyelinase activity is reduced by 33 percent following addition of EDTA. Functionally, catalyzes the hydrolysis of sphingomyelin. Sphingomyelinases D are produced by some spider in their venoms, but also by arthropods such as ticks, or pathogenic bacteria and fungi. They might play a role in pathogenicity through different mechanisms, such as membrane destabilization and host cell penetration, but also pulmonary inflammation and cutaneous lesions. In Aspergillus flavus (strain ATCC 200026 / FGSC A1120 / IAM 13836 / NRRL 3357 / JCM 12722 / SRRC 167), this protein is Sphingomyelinase D.